The primary structure comprises 545 residues: MFCEQCEQTASGNGCHQWGACGKSPEVNAVQDLLVYCLRGLAPVVLKAKELGISTHQADVFTGEALFATMTNVNFDKKRFTKYIRDCITIREQLKAAINQPVAWTDICCYQPNFNESLVEQGQNVALTLISQATNNLDIFSLKLTVLYGIKGCASYNFHAQELGQEDEKVYSFIQEALASLDRNDLSLNDWVNLALKVGETNLKAMELLDAGHTSTYGHPTPTSVPLNPRLGKALLVSGHDIKQLAAILQQTANTGLTIYTHGELLPAHGYPILKQKYPHLYGHYGTAWQNQTKDFAKFPGAIIVTTNCLMPPHETYDEKLFTIGPVGYQGINYLASDETGTPDFTPAIEKALSMPGFTTEETPRNVMVGFAHDAVLKVADTVIEAVQQGKIRHFFLVGGCDGAKPGRTYYTEFVEKVPKDCIVLTLACGKFRFFDKQLGSIGTLPRLMDVGQCNDAYSAIKIALGLANAFNIEVNQLPLSMILSWYEQKAIAVLLTLLYLGIKDIRLGPTLPAFITPNLFKLLSETYNLQSITTPEKDLAACLA.

Positions 3, 6, 15, and 21 each coordinate [4Fe-4S] cluster. Residues H240, E264, C309, C401, C429, C454, E488, and K490 each coordinate hybrid [4Fe-2O-2S] cluster. C401 carries the post-translational modification Cysteine persulfide.

The protein belongs to the HCP family. The cofactor is [4Fe-4S] cluster. Hybrid [4Fe-2O-2S] cluster is required as a cofactor.

The protein localises to the cytoplasm. It carries out the reaction A + NH4(+) + H2O = hydroxylamine + AH2 + H(+). In terms of biological role, catalyzes the reduction of hydroxylamine to form NH(3) and H(2)O. This Rippkaea orientalis (strain PCC 8801 / RF-1) (Cyanothece sp. (strain PCC 8801)) protein is Hydroxylamine reductase.